A 286-amino-acid chain; its full sequence is ATP synthase gamma chain (286 aa).

This sequence belongs to the ATPase gamma chain family. In terms of assembly, F-type ATPases have 2 components, CF(1) - the catalytic core - and CF(0) - the membrane proton channel. CF(1) has five subunits: alpha(3), beta(3), gamma(1), delta(1), epsilon(1). CF(0) has three main subunits: a, b and c.

It is found in the cell inner membrane. In terms of biological role, produces ATP from ADP in the presence of a proton gradient across the membrane. The gamma chain is believed to be important in regulating ATPase activity and the flow of protons through the CF(0) complex. The protein is ATP synthase gamma chain of Pseudomonas savastanoi pv. phaseolicola (strain 1448A / Race 6) (Pseudomonas syringae pv. phaseolicola (strain 1448A / Race 6)).